A 1047-amino-acid chain; its full sequence is UPF0182 protein Mlut_14990 (1047 aa).

Composition is skewed to gly residues over residues 1–27 and 49–59; these read MSFGQGGGGPFGGPPRDGGGTAGGQSG and GPGGPFGGGGS. The segment at 1–66 is disordered; that stretch reads MSFGQGGGGP…GGSSAARGRG (66 aa). 7 helical membrane-spanning segments follow: residues 71–91, 114–134, 168–188, 214–234, 266–286, 314–334, and 341–361; these read PSALVLTIIAVAVLVGLFVVF, VLAKGALFLIAGLGMALAVWL, LVFLGVPLVLGVFAGSTAMNG, FFMATLPFLTLVVGYLISVVL, AHIGITLAVFLLLQGVNFWLN, AILAVTAVIVAGLFVWTVVSG, and IGTAVLVITALVVGTAYPFIV. Disordered regions lie at residues 544–568, 941–965, and 1007–1047; these read GAPAVERDRPQTADSQEDTAYTFSG, GDSGAVTPEEKQAEAPAPGEKPTAP, and EALK…TPSG. Positions 555 to 565 are enriched in polar residues; it reads TADSQEDTAYT. Positions 1015-1037 are enriched in low complexity; it reads ADDALGGDAPAQEQAPAEASPAP. Positions 1038–1047 are enriched in pro residues; sequence SSSPSPTPSG.

It belongs to the UPF0182 family.

Its subcellular location is the cell membrane. In Micrococcus luteus (strain ATCC 4698 / DSM 20030 / JCM 1464 / CCM 169 / CCUG 5858 / IAM 1056 / NBRC 3333 / NCIMB 9278 / NCTC 2665 / VKM Ac-2230) (Micrococcus lysodeikticus), this protein is UPF0182 protein Mlut_14990.